Reading from the N-terminus, the 845-residue chain is Envelope glycoprotein B (845 aa).

Residues 1–26 form the signal peptide; that stretch reads MTPRSRLATLGTVILLVCFCAGAAHS. The Virion surface portion of the chain corresponds to 27–732; sequence RGDTFQTSSS…TGFINFIKHP (706 aa). A disordered region spans residues 29-57; the sequence is DTFQTSSSPTPPGSSSKAPTKPGEEASGP. A compositionally biased stretch (low complexity) spans 33 to 49; it reads TSSSPTPPGSSSKAPTK. Cystine bridges form between Cys68–Cys528, Cys85–Cys484, Cys157–Cys222, Cys315–Cys362, and Cys550–Cys587. Positions 124–130 are involved in fusion and/or binding to host membrane; that stretch reads VYRGLTE. N-linked (GlcNAc...) asparagine; by host glycosylation occurs at Asn179. The involved in fusion and/or binding to host membrane stretch occupies residues 208–216; sequence GWFPGIYRV. N-linked (GlcNAc...) asparagine; by host glycosylation is found at Asn254, Asn275, Asn355, Asn368, Asn372, Asn385, and Asn408. The tract at residues 411–451 is disordered; that stretch reads HAQGDSGNPTSSPPPSASPMTTSASRRKRRSASTAAAGGGG. 5 N-linked (GlcNAc...) asparagine; by host glycosylation sites follow: Asn455, Asn562, Asn599, Asn614, and Asn628. Residues 678–730 are hydrophobic membrane proximal region; sequence LDNTIDMNKERFVRDLSEIVADLGGIGKTVVNVASSVVTLCGSLVTGFINFIK. Residues 733-753 form a helical membrane-spanning segment; that stretch reads LGGMLMIIIVIAIILIIFMLS. Residues 754 to 845 lie on the Intravirion side of the membrane; that stretch reads RRTNTIAQAP…SLDISPETGE (92 aa). Residues 802–845 form a disordered region; sequence RQKADDLKKSTPSVFQRTANGLRQRLRGYKPLTQSLDISPETGE. Polar residues predominate over residues 811 to 822; sequence STPSVFQRTANG. Positions 830–833 match the Internalization motif motif; sequence YKPL.

This sequence belongs to the herpesviridae glycoprotein B family. As to quaternary structure, homotrimer; disulfide-linked. Binds to heparan sulfate proteoglycans. Interacts with gH/gL heterodimer. Interacts with host ITGAV-ITGB3; this interaction mediates viral entry. In terms of processing, a proteolytic cleavage by host furin generates two subunits that remain linked by disulfide bonds.

The protein resides in the virion membrane. Its subcellular location is the host cell membrane. It is found in the host endosome membrane. It localises to the host Golgi apparatus membrane. In terms of biological role, envelope glycoprotein that forms spikes at the surface of the virion envelope. Participates in viral entry through an RGD motif that binds ITGAV-ITGB3. Membrane fusion is mediated by the fusion machinery composed at least of gB and the heterodimer gH/gL. May be involved in the fusion between the virion envelope and the outer nuclear membrane during virion egress. The protein is Envelope glycoprotein B of Homo sapiens (Human).